We begin with the raw amino-acid sequence, 349 residues long: Fructose-bisphosphate aldolase 2, chloroplastic (349 aa).

2 residues coordinate substrate: arginine 47 and lysine 137. Catalysis depends on glutamate 177, which acts as the Proton acceptor. The active-site Schiff-base intermediate with dihydroxyacetone-P is the lysine 219.

It belongs to the class I fructose-bisphosphate aldolase family.

The protein resides in the plastid. Its subcellular location is the chloroplast. The enzyme catalyses beta-D-fructose 1,6-bisphosphate = D-glyceraldehyde 3-phosphate + dihydroxyacetone phosphate. It participates in carbohydrate degradation; glycolysis; D-glyceraldehyde 3-phosphate and glycerone phosphate from D-glucose: step 4/4. This chain is Fructose-bisphosphate aldolase 2, chloroplastic, found in Pisum sativum (Garden pea).